We begin with the raw amino-acid sequence, 418 residues long: UDP-N-acetylglucosamine 1-carboxyvinyltransferase (418 aa).

Phosphoenolpyruvate is bound at residue 22–23 (KN). UDP-N-acetyl-alpha-D-glucosamine is bound at residue Arg92. Cys116 functions as the Proton donor in the catalytic mechanism. The residue at position 116 (Cys116) is a 2-(S-cysteinyl)pyruvic acid O-phosphothioketal. UDP-N-acetyl-alpha-D-glucosamine-binding positions include 121–125 (RPIDL), Asp305, and Leu327.

Belongs to the EPSP synthase family. MurA subfamily.

It localises to the cytoplasm. The catalysed reaction is phosphoenolpyruvate + UDP-N-acetyl-alpha-D-glucosamine = UDP-N-acetyl-3-O-(1-carboxyvinyl)-alpha-D-glucosamine + phosphate. The protein operates within cell wall biogenesis; peptidoglycan biosynthesis. Cell wall formation. Adds enolpyruvyl to UDP-N-acetylglucosamine. The polypeptide is UDP-N-acetylglucosamine 1-carboxyvinyltransferase (Campylobacter jejuni subsp. jejuni serotype O:23/36 (strain 81-176)).